Consider the following 84-residue polypeptide: Putative membrane protein insertion efficiency factor (84 aa).

Residues Trp60 to His84 form a disordered region. Basic and acidic residues predominate over residues Val68–His84.

The protein belongs to the UPF0161 family.

It localises to the cell membrane. Its function is as follows. Could be involved in insertion of integral membrane proteins into the membrane. The chain is Putative membrane protein insertion efficiency factor from Streptococcus gordonii (strain Challis / ATCC 35105 / BCRC 15272 / CH1 / DL1 / V288).